The sequence spans 487 residues: Transmembrane protein 161B (487 aa).

A glycan (N-linked (GlcNAc...) asparagine) is linked at asparagine 34. The helical transmembrane segment at 107 to 127 (LVDFTVAATIVYLVTEVYYSF) threads the bilayer. Asparagine 135 carries N-linked (GlcNAc...) asparagine glycosylation. 2 helical membrane-spanning segments follow: residues 136 to 156 (ISLV…FSLT) and 169 to 189 (SVCV…LIVT). A glycan (N-linked (GlcNAc...) asparagine) is linked at asparagine 203. 5 helical membrane-spanning segments follow: residues 228-248 (FKFF…FPGL), 265-285 (ITQT…LLWV), 305-325 (LMTE…LCVL), 367-387 (VFYY…MLLH), and 459-479 (LSFL…FGLF).

It belongs to the TMEM161 family.

Its subcellular location is the cell membrane. Its function is as follows. Essential for maintaining normal cardiac rhythm in the developing heart and for neonatal survival. Inhibits potassium and calcium currents in the cardiomyocytes, this assists in timely action potential repolarization and thereby maintains normal cardiac rhythm. This chain is Transmembrane protein 161B (Tmem161b), found in Mus musculus (Mouse).